Consider the following 212-residue polypeptide: ATP phosphoribosyltransferase (212 aa).

It belongs to the ATP phosphoribosyltransferase family. Short subfamily. In terms of assembly, heteromultimer composed of HisG and HisZ subunits.

Its subcellular location is the cytoplasm. The catalysed reaction is 1-(5-phospho-beta-D-ribosyl)-ATP + diphosphate = 5-phospho-alpha-D-ribose 1-diphosphate + ATP. Its pathway is amino-acid biosynthesis; L-histidine biosynthesis; L-histidine from 5-phospho-alpha-D-ribose 1-diphosphate: step 1/9. Functionally, catalyzes the condensation of ATP and 5-phosphoribose 1-diphosphate to form N'-(5'-phosphoribosyl)-ATP (PR-ATP). Has a crucial role in the pathway because the rate of histidine biosynthesis seems to be controlled primarily by regulation of HisG enzymatic activity. The protein is ATP phosphoribosyltransferase of Prochlorococcus marinus (strain MIT 9301).